A 203-amino-acid chain; its full sequence is Hydra actinoporin-like toxin 2 (203 aa).

The N-terminal stretch at 1–21 (MLSYLCFGCFLVSASLEIACG) is a signal peptide. The Cell attachment site motif lies at 175 to 177 (RGG).

The protein belongs to the actinoporin family. HALT subfamily. In terms of assembly, octamer or nonamer in membranes. Monomer in the soluble state. In vitro, interacts with folate receptor alpha (of target organism). In terms of tissue distribution, strongly expressed in the gland and mucous cells in the endoderm.

It is found in the nematocyst. It localises to the secreted. Its subcellular location is the target cell membrane. In terms of biological role, pore-forming protein that forms hydrophilic pores and causes cytolysis. Compared to equinatoxin-2 (AC P61914), it reveals lower cytolysis activity (5-12-fold difference, tested on erythrocytes), a larger pore size (probably 2-3 nm) and different affinity to membrane lipids (100-fold lower affinity to sphingomyelin). Binds to sulfatides (SFT). Shows cytolytic activity on HeLa cells, with a different potency than its paralogs (from most potent to less potent: HALT-4&gt;HALT-6~HALT-1&gt;HALT-3&gt;HALT-7&gt;HALT-2). Pore formation is a multi-step process that involves specific recognition of membrane lipid by a protein aromatic residues rich region, firm binding to the membrane (mainly driven by hydrophobic interactions) accompanied by the transfer of the N-terminal region to the lipid-water interface and finally pore formation after oligomerization of monomers. In vitro, binds to the folate receptor alpha (FOLR1), a GPI-anchored membrane protein that plays a major role in the uptake of folate/folic acid into cells via endocytosis, suggesting a possible involvement of this receptor in the mechanism of HALT-1-induced cell lysis. In vivo, does not cause visible paralysis in larvae of the blowfly Sarcophaga faculata, the most common arthropod prey of Hydra. The chain is Hydra actinoporin-like toxin 2 from Hydra vulgaris (Hydra).